The sequence spans 90 residues: U7-theraphotoxin-Hhn1f (90 aa).

The signal sequence occupies residues 1 to 19 (MKTAIFTVVLALAVFAVLS). The propeptide occupies 20–50 (FGWEANEKALSEEFTELIHEKEAASETEARG). 3 disulfides stabilise this stretch: C51–C65, C58–C70, and C64–C81.

It belongs to the neurotoxin 10 (Hwtx-1) family. 13 (Hntx-13) subfamily. In terms of tissue distribution, expressed by the venom gland.

The protein localises to the secreted. Its function is as follows. Ion channel inhibitor. The sequence is that of U7-theraphotoxin-Hhn1f from Cyriopagopus hainanus (Chinese bird spider).